A 204-amino-acid chain; its full sequence is tRNA (pseudouridine(54)-N(1))-methyltransferase (204 aa).

S-adenosyl-L-methionine contacts are provided by residues Leu130, Gly157, 180-185, and Cys190; that span reads LSPLEL.

It belongs to the methyltransferase superfamily. TrmY family. As to quaternary structure, homodimer.

It is found in the cytoplasm. It carries out the reaction pseudouridine(54) in tRNA + S-adenosyl-L-methionine = N(1)-methylpseudouridine(54) in tRNA + S-adenosyl-L-homocysteine + H(+). In terms of biological role, specifically catalyzes the N1-methylation of pseudouridine at position 54 (Psi54) in tRNAs. The protein is tRNA (pseudouridine(54)-N(1))-methyltransferase of Methanococcus aeolicus (strain ATCC BAA-1280 / DSM 17508 / OCM 812 / Nankai-3).